We begin with the raw amino-acid sequence, 393 residues long: Bifunctional enzyme Fae/Hps (393 aa).

Positions 1-161 (MYQIGEALVG…YEKDRGAHAV (161 aa)) are formaldehyde-activating enzyme. The active-site Proton donor is the His-17. Substrate contacts are provided by Asp-19, Leu-48, Lys-66, Thr-68, and Gln-83. A 3-hexulose-6-phosphate synthase region spans residues 162–393 (MGFKVQRLWD…IDQFRVMTDF (232 aa)).

It in the N-terminal section; belongs to the formaldehyde-activating enzyme family. The protein in the C-terminal section; belongs to the HPS/KGPDC family. HPS subfamily.

It carries out the reaction 5,6,7,8-tetrahydromethanopterin + formaldehyde = 5,10-methylenetetrahydromethanopterin + H2O. The enzyme catalyses D-ribulose 5-phosphate + formaldehyde = D-arabino-hex-3-ulose 6-phosphate. It participates in carbohydrate biosynthesis; D-ribose 5-phosphate biosynthesis. Its function is as follows. Catalyzes the condensation of formaldehyde with tetrahydromethanopterin (H(4)MPT) to 5,10-methylenetetrahydromethanopterin. Catalyzes the reversible formation of ribulose-5-phosphate and formaldehyde from 3-hexulose-6-phosphate. This Methanosphaerula palustris (strain ATCC BAA-1556 / DSM 19958 / E1-9c) protein is Bifunctional enzyme Fae/Hps.